The chain runs to 215 residues: MERNKLARQIIDTCLEMTRLGLNQGTAGNVSVRYQDGMLITPTGIPYEKLTESHIVFIDGNGKHEEGKLPSSEWRFHMAAYQSRPDANAVVHNHAVHCTAVSILNRPIPAIHYMIAAAGGNSIPCAPYATFGTRELSEHVALALKNRKATLLQHHGLIACEANLEKALWLAHEVEVLAQLYLTTLAITDPVPVLSDEEIAVVLEKFKTYGLRIEE.

Substrate contacts are provided by residues 28 to 29 (GN), 43 to 44 (TG), and 71 to 72 (SS). The Proton donor/acceptor role is filled by Glu73. The Zn(2+) site is built by Glu73, His92, His94, and His155.

It belongs to the aldolase class II family. AraD/FucA subfamily. As to quaternary structure, homotetramer. Requires Zn(2+) as cofactor.

The enzyme catalyses L-fuculose 1-phosphate = (S)-lactaldehyde + dihydroxyacetone phosphate. Its pathway is carbohydrate degradation; L-fucose degradation; L-lactaldehyde and glycerone phosphate from L-fucose: step 3/3. In terms of biological role, involved in the degradation of L-fucose and D-arabinose. Catalyzes the reversible cleavage of L-fuculose 1-phosphate (Fuc1P) to yield dihydroxyacetone phosphate (DHAP) and L-lactaldehyde. The sequence is that of L-fuculose phosphate aldolase from Escherichia coli O6:H1 (strain CFT073 / ATCC 700928 / UPEC).